Reading from the N-terminus, the 376-residue chain is 2-oxoglutarate synthase subunit KorA (376 aa).

Heterotetramer of the KorA, KorB, KorC and KorD subunits.

The catalysed reaction is 2 oxidized [2Fe-2S]-[ferredoxin] + 2-oxoglutarate + CoA = succinyl-CoA + 2 reduced [2Fe-2S]-[ferredoxin] + CO2 + H(+). The sequence is that of 2-oxoglutarate synthase subunit KorA (korA) from Methanothermobacter thermautotrophicus (strain ATCC 29096 / DSM 1053 / JCM 10044 / NBRC 100330 / Delta H) (Methanobacterium thermoautotrophicum).